The sequence spans 420 residues: Protein translocase subunit SecF (420 aa).

6 consecutive transmembrane segments (helical) span residues 7 to 27, 250 to 270, 276 to 296, 309 to 327, 358 to 378, and 388 to 408; these read FSLL…AGVL, LLVR…FLYV, WFFA…MVSF, IAAI…VVVF, VVTT…TEGG, and VGMV…IALI.

It belongs to the SecD/SecF family. SecF subfamily. Forms a complex with SecD. Part of the essential Sec protein translocation apparatus which comprises SecA, SecYEG and auxiliary proteins SecDF. Other proteins may also be involved.

The protein localises to the cell inner membrane. In terms of biological role, part of the Sec protein translocase complex. Interacts with the SecYEG preprotein conducting channel. SecDF uses the proton motive force (PMF) to complete protein translocation after the ATP-dependent function of SecA. The chain is Protein translocase subunit SecF from Treponema pallidum (strain Nichols).